The chain runs to 120 residues: Large ribosomal subunit protein uL14 (120 aa).

This sequence belongs to the universal ribosomal protein uL14 family. Part of the 50S ribosomal subunit. Forms a cluster with proteins L3 and L19. In the 70S ribosome, L14 and L19 interact and together make contacts with the 16S rRNA in bridges B5 and B8.

In terms of biological role, binds to 23S rRNA. Forms part of two intersubunit bridges in the 70S ribosome. This Phytoplasma australiense protein is Large ribosomal subunit protein uL14.